A 199-amino-acid polypeptide reads, in one-letter code: Peptidyl-tRNA hydrolase (199 aa).

Position 18 (Tyr18) interacts with tRNA. His23 (proton acceptor) is an active-site residue. Residues Tyr69, Asn71, and Asn117 each contribute to the tRNA site.

Belongs to the PTH family. In terms of assembly, monomer.

Its subcellular location is the cytoplasm. The enzyme catalyses an N-acyl-L-alpha-aminoacyl-tRNA + H2O = an N-acyl-L-amino acid + a tRNA + H(+). Its function is as follows. Hydrolyzes ribosome-free peptidyl-tRNAs (with 1 or more amino acids incorporated), which drop off the ribosome during protein synthesis, or as a result of ribosome stalling. In terms of biological role, catalyzes the release of premature peptidyl moieties from peptidyl-tRNA molecules trapped in stalled 50S ribosomal subunits, and thus maintains levels of free tRNAs and 50S ribosomes. This is Peptidyl-tRNA hydrolase from Prochlorococcus marinus (strain MIT 9515).